The following is a 213-amino-acid chain: MNESLLTQFGNSLTRVEKALENLKNGKGVLLVDDENRENEGDLIFPAETITVPQMVMLIRECSGIVCLCLTDKKVKKLGLTQMVHNNTCTYETAFTISIEAKEGVTTGVSAADRVTTILTAVKDDCKPEDLCHPGHVFPLRARAGGVLTRPGHTEGTVDLMRLAGYNPAGILCELTNPDGTMARLPQIINFAKKHNLAVLSIEDIIKYKKITT.

Residues 37–38 (RE), Asp-42, 150–154 (RPGHT), and Glu-174 each bind D-ribulose 5-phosphate. Glu-38 is a Mg(2+) binding site. His-153 serves as a coordination point for Mg(2+).

The protein belongs to the DHBP synthase family. Homodimer. Requires Mg(2+) as cofactor. Mn(2+) serves as cofactor.

It carries out the reaction D-ribulose 5-phosphate = (2S)-2-hydroxy-3-oxobutyl phosphate + formate + H(+). The protein operates within cofactor biosynthesis; riboflavin biosynthesis; 2-hydroxy-3-oxobutyl phosphate from D-ribulose 5-phosphate: step 1/1. Its function is as follows. Catalyzes the conversion of D-ribulose 5-phosphate to formate and 3,4-dihydroxy-2-butanone 4-phosphate. This chain is 3,4-dihydroxy-2-butanone 4-phosphate synthase, found in Clostridium botulinum (strain ATCC 19397 / Type A).